The chain runs to 305 residues: Homeobox protein ceh-23 (305 aa).

Disordered regions lie at residues 113-140 and 262-305; these read ASCP…ERRR and RRSK…KVLN. Residues 120–135 show a composition bias toward polar residues; the sequence is ASSQATVTLQVPSTGS. Positions 211–270 form a DNA-binding region, homeobox; that stretch reads HRKARTIYGTTQTQQLEDMFKGQMYVVGAERENLAQRLGLSPSQVRIWFQNRRSKHRRKQ. A compositionally biased stretch (acidic residues) spans 287 to 305; the sequence is GKDEEEDDEEDEDDVKVLN.

It belongs to the distal-less homeobox family.

It is found in the nucleus. Its function is as follows. Probable transcription factor. Required for differentiation of AIY interneurons, acting downstream of LIM/homeobox protein ttx-3. Modulates gene expression, acting downstream of AMP kinase aak-2/AMPK signaling. Modulates lifespan. This chain is Homeobox protein ceh-23 (ceh-23), found in Caenorhabditis elegans.